A 416-amino-acid chain; its full sequence is Putative competence-damage inducible protein (416 aa).

The protein belongs to the CinA family.

In Bacillus velezensis (strain DSM 23117 / BGSC 10A6 / LMG 26770 / FZB42) (Bacillus amyloliquefaciens subsp. plantarum), this protein is Putative competence-damage inducible protein.